Consider the following 132-residue polypeptide: Fatty acid-binding protein, intestinal (132 aa).

Alanine 2 carries the post-translational modification N-acetylalanine. Tryptophan 83 and arginine 107 together coordinate hexadecanoate. Positions 83 and 107 each coordinate tetradecanoate.

The protein belongs to the calycin superfamily. Fatty-acid binding protein (FABP) family. As to expression, expressed in the small intestine. Expression in the mucosal cells of the ileum extends from the midvillar region to the villus tips.

The protein localises to the cytoplasm. Its function is as follows. FABPs are thought to play a role in the intracellular transport of long-chain fatty acids and their acyl-CoA esters. FABP2 is probably involved in triglyceride-rich lipoprotein synthesis. Binds saturated long-chain fatty acids with a high affinity, but binds with a lower affinity to unsaturated long-chain fatty acids. FABP2 may also help maintain energy homeostasis by functioning as a lipid sensor. The polypeptide is Fatty acid-binding protein, intestinal (Fabp2) (Rattus norvegicus (Rat)).